A 462-amino-acid polypeptide reads, in one-letter code: Proline--tRNA ligase (462 aa).

This sequence belongs to the class-II aminoacyl-tRNA synthetase family. ProS type 3 subfamily. As to quaternary structure, homodimer.

The protein resides in the cytoplasm. The enzyme catalyses tRNA(Pro) + L-proline + ATP = L-prolyl-tRNA(Pro) + AMP + diphosphate. Functionally, catalyzes the attachment of proline to tRNA(Pro) in a two-step reaction: proline is first activated by ATP to form Pro-AMP and then transferred to the acceptor end of tRNA(Pro). This chain is Proline--tRNA ligase, found in Thermoplasma volcanium (strain ATCC 51530 / DSM 4299 / JCM 9571 / NBRC 15438 / GSS1).